A 1064-amino-acid chain; its full sequence is Carbamoyl phosphate synthase large chain (1064 aa).

Residues methionine 1–glutamate 401 are carboxyphosphate synthetic domain. The ATP site is built by arginine 129, arginine 169, glycine 175, glycine 176, glutamate 208, isoleucine 210, glutamate 215, glycine 241, valine 242, histidine 243, glutamine 284, and glutamate 298. The 195-residue stretch at lysine 133–isoleucine 327 folds into the ATP-grasp 1 domain. Residues glutamine 284, glutamate 298, and asparagine 300 each contribute to the Mg(2+) site. 3 residues coordinate Mn(2+): glutamine 284, glutamate 298, and asparagine 300. Positions isoleucine 402–serine 546 are oligomerization domain. A carbamoyl phosphate synthetic domain region spans residues lysine 547 to lysine 929. Residues glutamate 671–leucine 861 form the ATP-grasp 2 domain. ATP-binding residues include arginine 707, serine 746, leucine 748, glutamate 752, glycine 777, valine 778, histidine 779, serine 780, glutamine 820, and glutamate 832. Mg(2+) is bound by residues glutamine 820, glutamate 832, and asparagine 834. Residues glutamine 820, glutamate 832, and asparagine 834 each contribute to the Mn(2+) site. The 135-residue stretch at leucine 930 to isoleucine 1064 folds into the MGS-like domain. Residues leucine 930 to isoleucine 1064 form an allosteric domain region.

It belongs to the CarB family. In terms of assembly, composed of two chains; the small (or glutamine) chain promotes the hydrolysis of glutamine to ammonia, which is used by the large (or ammonia) chain to synthesize carbamoyl phosphate. Tetramer of heterodimers (alpha,beta)4. It depends on Mg(2+) as a cofactor. Mn(2+) is required as a cofactor.

It catalyses the reaction hydrogencarbonate + L-glutamine + 2 ATP + H2O = carbamoyl phosphate + L-glutamate + 2 ADP + phosphate + 2 H(+). The enzyme catalyses hydrogencarbonate + NH4(+) + 2 ATP = carbamoyl phosphate + 2 ADP + phosphate + 2 H(+). It participates in amino-acid biosynthesis; L-arginine biosynthesis; carbamoyl phosphate from bicarbonate: step 1/1. Its pathway is pyrimidine metabolism; UMP biosynthesis via de novo pathway; (S)-dihydroorotate from bicarbonate: step 1/3. Functionally, large subunit of the glutamine-dependent carbamoyl phosphate synthetase (CPSase). CPSase catalyzes the formation of carbamoyl phosphate from the ammonia moiety of glutamine, carbonate, and phosphate donated by ATP, constituting the first step of 2 biosynthetic pathways, one leading to arginine and/or urea and the other to pyrimidine nucleotides. The large subunit (synthetase) binds the substrates ammonia (free or transferred from glutamine from the small subunit), hydrogencarbonate and ATP and carries out an ATP-coupled ligase reaction, activating hydrogencarbonate by forming carboxy phosphate which reacts with ammonia to form carbamoyl phosphate. In Lactococcus lactis subsp. cremoris (strain SK11), this protein is Carbamoyl phosphate synthase large chain.